We begin with the raw amino-acid sequence, 278 residues long: MQIMLCAISNIASGNCSEDCKYCTQSAHVKTDIQKYRRKELSQIVLEAKMAKKNEALGFCLVTAGLGLDDEKLEYVCEAAKAVQKEVPNLLLIACNGMASVEQLKELKKAGIFSYNHNLETSKEFFPQICTTHTWESRFQTNLNAKEAGLMLCCGGIYGMGESEEDRLSFRKSLQELQPFSTPINFFIANENLKLQVPRLNADEALKIVRDTKEALPQSVVMVAGGREVVLRERQYEIFQAGAGAIVIGDYLTTKGEEPSQDIIKLKEMGFTFASECH.

Residues 1 to 227 (MQIMLCAISN…QSVVMVAGGR (227 aa)) enclose the Radical SAM core domain. Positions 16, 20, and 23 each coordinate [4Fe-4S] cluster. The [2Fe-2S] cluster site is built by cysteine 60, cysteine 95, and cysteine 153.

The protein belongs to the radical SAM superfamily. Biotin synthase family. In terms of assembly, homodimer. It depends on [4Fe-4S] cluster as a cofactor. Requires [2Fe-2S] cluster as cofactor.

It carries out the reaction (4R,5S)-dethiobiotin + (sulfur carrier)-SH + 2 reduced [2Fe-2S]-[ferredoxin] + 2 S-adenosyl-L-methionine = (sulfur carrier)-H + biotin + 2 5'-deoxyadenosine + 2 L-methionine + 2 oxidized [2Fe-2S]-[ferredoxin]. It participates in cofactor biosynthesis; biotin biosynthesis; biotin from 7,8-diaminononanoate: step 2/2. In terms of biological role, catalyzes the conversion of dethiobiotin (DTB) to biotin by the insertion of a sulfur atom into dethiobiotin via a radical-based mechanism. The polypeptide is Biotin synthase (Campylobacter jejuni subsp. jejuni serotype O:23/36 (strain 81-176)).